The sequence spans 2912 residues: Fibrillin-2 (2912 aa).

Residues 1-28 (MGRRRRLCLQLYFLWLGCVVLWAQGTAG) form the signal peptide. The interval 27–52 (AGQPQPPPPKPPRPQPPPQQVRSATA) is disordered. The propeptide occupies 29–77 (QPQPPPPKPPRPQPPPQQVRSATAGSEGGFLAPEYREEGAAVASRVRRR). The segment covering 30–45 (PQPPPPKPPRPQPPPQ) has biased composition (pro residues). EGF-like domains are found at residues 111 to 142 (IVPI…STCG), 145 to 176 (SIQQ…TYCG), and 176 to 208 (GQPV…PQCE). 9 disulfide bridges follow: cysteine 115-cysteine 124, cysteine 119-cysteine 130, cysteine 132-cysteine 141, cysteine 149-cysteine 159, cysteine 153-cysteine 164, cysteine 166-cysteine 175, cysteine 180-cysteine 190, cysteine 184-cysteine 196, and cysteine 198-cysteine 207. The segment at 149–359 (CSVRCMNGGT…VTSTDGSRCI (211 aa)) is interaction with MFAP4. The TB 1 domain maps to 214 to 266 (GPCFTQVNNQMCQGQLTGIVCTKTLCCATIGRAWGHPCEMCPAQPQPCRRGFI). The EGF-like 4; calcium-binding domain maps to 276–317 (DVDECQAIPGICQGGNCINTVGSFECRCPAGHKQSETTQKCE). Disulfide bonds link cysteine 280-cysteine 292, cysteine 287-cysteine 301, cysteine 303-cysteine 316, cysteine 322-cysteine 334, cysteine 329-cysteine 343, and cysteine 345-cysteine 358. An O-linked (Glc) serine glycan is attached at serine 298. In terms of domain architecture, EGF-like 5; calcium-binding spans 318 to 359 (DIDECSIIPGICETGECSNTVGSYFCVCPRGYVTSTDGSRCI). O-linked (Glc) serine glycosylation occurs at serine 340. A TB 2 domain is found at 364 to 417 (GMCFSGLVNGRCAQELPGRMTKMQCCCEPGRCWGIGTIPEACPVRGSEEYRRLC). A glycan (N-linked (GlcNAc...) asparagine) is linked at asparagine 492. An EGF-like 6 domain is found at 494–534 (TIDICKHHANLCLNGRCIPTVSSYRCECNMGYKQDANGDCI). 15 disulfides stabilise this stretch: cysteine 498/cysteine 510, cysteine 505/cysteine 519, cysteine 521/cysteine 533, cysteine 539/cysteine 549, cysteine 544/cysteine 558, cysteine 560/cysteine 573, cysteine 579/cysteine 591, cysteine 586/cysteine 600, cysteine 602/cysteine 615, cysteine 621/cysteine 632, cysteine 627/cysteine 641, cysteine 643/cysteine 656, cysteine 662/cysteine 673, cysteine 668/cysteine 682, and cysteine 684/cysteine 697. Residue serine 516 is glycosylated (O-linked (Glc) serine). In terms of domain architecture, EGF-like 7; calcium-binding spans 535–574 (DVDECTSNPCTNGDCVNTPGSYYCKCHAGFQRTPTKQACI). O-linked (Glc) serine glycosylation is present at serine 555. The EGF-like 8; calcium-binding domain maps to 575-616 (DIDECIQNGVLCKNGRCVNTDGSFQCICNAGFELTTDGKNCV). Serine 597 is a glycosylation site (O-linked (Glc) serine). One can recognise an EGF-like 9; calcium-binding domain in the interval 617–657 (DHDECTTTNMCLNGMCINEDGSFKCICKPGFVLAPNGRYCT). Serine 638 carries an O-linked (Glc) serine glycan. The region spanning 658–698 (DVDECQTPGICMNGHCINSEGSFRCDCPPGLAVGMDGRVCV) is the EGF-like 10; calcium-binding domain. The O-linked (Glc) serine glycan is linked to serine 679. The TB 3 domain maps to 704-756 (STCYGGIKKGVCVRPFPGAVTKSECCCANPDYGFGEPCQPCPAKNSAEFHGLC). Positions 768-809 (DINECALDPDICANGICENLRGSYRCNCNSGYEPDASGRNCI) constitute an EGF-like 11; calcium-binding domain. Intrachain disulfides connect cysteine 772–cysteine 784, cysteine 779–cysteine 793, cysteine 795–cysteine 808, cysteine 814–cysteine 826, cysteine 821–cysteine 835, cysteine 837–cysteine 850, cysteine 856–cysteine 866, cysteine 861–cysteine 875, and cysteine 877–cysteine 890. Residues 810-851 (DIDECLVNRLLCDNGLCRNTPGSYSCTCPPGYVFRTETETCE) form the EGF-like 12; calcium-binding domain. A glycan (O-linked (Glc) serine) is linked at serine 832. The EGF-like 13; calcium-binding domain occupies 852-891 (DINECESNPCVNGACRNNLGSFNCECSPGSKLSSTGLICI). An O-linked (Glc) serine glycan is attached at serine 872. Residues 896 to 947 (GTCWLNIQDSRCEVNINGATLKSECCATLGAAWGSPCERCELDTACPRGLAR) enclose the TB 4 domain. The region spanning 955–996 (DVNECEVFPGVCPNGRCVNSKGSFHCECPEGLTLDGTGRVCL) is the EGF-like 14; calcium-binding domain. 3 disulfide bridges follow: cysteine 959–cysteine 971, cysteine 966–cysteine 980, and cysteine 982–cysteine 995. An O-linked (Glc) serine glycan is attached at serine 977. One can recognise a TB 5 domain in the interval 1001–1052 (EQCYLKWDEDECIHPVPGKFRMDACCCAVGAAWGTECEECPKPGTKEYETLC). The EGF-like 15; calcium-binding domain maps to 1073–1114 (DINECKAFPGMCTYGKCRNTIGSFKCRCNSGFALDMEERNCT). Intrachain disulfides connect cysteine 1077/cysteine 1089, cysteine 1084/cysteine 1098, cysteine 1100/cysteine 1113, cysteine 1119/cysteine 1131, cysteine 1126/cysteine 1140, cysteine 1142/cysteine 1156, cysteine 1162/cysteine 1174, cysteine 1169/cysteine 1183, cysteine 1185/cysteine 1198, cysteine 1204/cysteine 1216, cysteine 1211/cysteine 1225, cysteine 1227/cysteine 1240, cysteine 1246/cysteine 1257, cysteine 1253/cysteine 1266, cysteine 1268/cysteine 1281, cysteine 1287/cysteine 1299, cysteine 1294/cysteine 1308, cysteine 1310/cysteine 1323, cysteine 1329/cysteine 1341, cysteine 1336/cysteine 1350, cysteine 1352/cysteine 1365, cysteine 1371/cysteine 1384, cysteine 1378/cysteine 1393, cysteine 1395/cysteine 1406, cysteine 1412/cysteine 1425, cysteine 1419/cysteine 1434, cysteine 1436/cysteine 1447, cysteine 1453/cysteine 1465, cysteine 1460/cysteine 1474, cysteine 1476/cysteine 1489, cysteine 1495/cysteine 1506, cysteine 1501/cysteine 1515, cysteine 1517/cysteine 1530, cysteine 1536/cysteine 1547, cysteine 1542/cysteine 1556, and cysteine 1558/cysteine 1571. An O-linked (Glc) serine glycan is attached at serine 1095. The N-linked (GlcNAc...) asparagine glycan is linked to asparagine 1112. The 43-residue stretch at 1115–1157 (DIDECRISPDLCGSGICVNTPGSFECECFEGYESGFMMMKNCM) folds into the EGF-like 16; calcium-binding domain. Residues 1158–1199 (DIDECERNPLLCRGGTCVNTEGSFQCDCPLGHELSPSREDCV) enclose the EGF-like 17; calcium-binding domain. O-linked (Glc) serine glycosylation is present at serine 1180. In terms of domain architecture, EGF-like 18; calcium-binding spans 1200 to 1241 (DINECSLSDNLCRNGKCVNMIGTYQCSCNPGYQATPDRQGCT). Threonine 1222 carries an O-linked (Glc) threonine glycan. In terms of domain architecture, EGF-like 19; calcium-binding spans 1242–1282 (DIDECMIMNGGCDTQCTNSEGSYECSCSEGYALMPDGRSCA). Serine 1263 is a glycosylation site (O-linked (Glc) serine). The EGF-like 20; calcium-binding domain maps to 1283 to 1324 (DIDECENNPDICDGGQCTNIPGEYRCLCYDGFMASMDMKTCI). The 42-residue stretch at 1325–1366 (DVNECDLNSNICMFGECENTKGSFICHCQLGYSVKKGTTGCT) folds into the EGF-like 21; calcium-binding domain. An O-linked (Glc) serine glycan is attached at serine 1347. An EGF-like 22; calcium-binding domain is found at 1367-1407 (DVDECEIGAHNCDMHASCLNIPGSFKCSCREGWIGNGIKCI). The O-linked (Glc) serine glycan is linked to serine 1390. The EGF-like 23; calcium-binding domain occupies 1408-1448 (DLDECSNGTHQCSINAQCVNTPGSYRCACSEGFTGDGFTCS). Asparagine 1414 is a glycosylation site (N-linked (GlcNAc...) asparagine). Positions 1449-1490 (DVDECAENINLCENGQCLNVPGAYRCECEMGFTPASDSRSCQ) constitute an EGF-like 24; calcium-binding domain. The region spanning 1491–1531 (DIDECSFQNICVFGTCNNLPGMFHCICDDGYELDRTGGNCT) is the EGF-like 25; calcium-binding domain. Asparagine 1529 carries N-linked (GlcNAc...) asparagine glycosylation. The EGF-like 26; calcium-binding domain occupies 1532 to 1572 (DIDECADPINCVNGLCVNTPGRYECNCPPDFQLNPTGVGCV). One can recognise a TB 6 domain in the interval 1577–1633 (GNCYLKFGPRGDGSLSCNTEIGVGVSRSSCCCSLGKAWGNPCETCPPVNSTEYYTLC). A glycan (N-linked (GlcNAc...) asparagine) is linked at asparagine 1625. The region spanning 1650-1691 (DIDECQELPGLCQGGNCINTFGSFQCECPQGYYLSEDTRICE) is the EGF-like 27; calcium-binding domain. 6 disulfides stabilise this stretch: cysteine 1654-cysteine 1666, cysteine 1661-cysteine 1675, cysteine 1677-cysteine 1690, cysteine 1696-cysteine 1708, cysteine 1703-cysteine 1717, and cysteine 1719-cysteine 1732. Serine 1672 carries an O-linked (Glc) serine glycan. An EGF-like 28; calcium-binding domain is found at 1692 to 1733 (DIDECFAHPGVCGPGTCYNTLGNYTCICPPEYMQVNGGHNCM). A glycan (N-linked (GlcNAc...) asparagine) is linked at asparagine 1714. An interaction with MFAP4 region spans residues 1735 to 2171 (MRKSFCYRSY…VPSLHDTRED (437 aa)). A TB 7 domain is found at 1738–1791 (SFCYRSYNGTTCENELPFNVTKRMCCCTYNVGKAWNKPCEPCPTPGTADFKTIC). N-linked (GlcNAc...) asparagine glycosylation is found at asparagine 1745 and asparagine 1756. The EGF-like 29; calcium-binding domain maps to 1808 to 1849 (DIDECKEIPGICANGVCINQIGSFRCECPTGFSYNDLLLVCE). 21 disulfides stabilise this stretch: cysteine 1812–cysteine 1824, cysteine 1819–cysteine 1833, cysteine 1835–cysteine 1848, cysteine 1854–cysteine 1867, cysteine 1861–cysteine 1876, cysteine 1878–cysteine 1890, cysteine 1896–cysteine 1908, cysteine 1903–cysteine 1917, cysteine 1919–cysteine 1932, cysteine 1938–cysteine 1948, cysteine 1943–cysteine 1957, cysteine 1959–cysteine 1971, cysteine 1977–cysteine 1990, cysteine 1985–cysteine 1999, cysteine 2001–cysteine 2014, cysteine 2020–cysteine 2032, cysteine 2027–cysteine 2041, cysteine 2043–cysteine 2054, cysteine 2060–cysteine 2072, cysteine 2067–cysteine 2081, and cysteine 2083–cysteine 2096. In terms of domain architecture, EGF-like 30; calcium-binding spans 1850-1891 (DIDECSNGDNLCQRNADCINSPGSYRCECAAGFKLSPNGACV). The O-linked (Glc) serine glycan is linked to serine 1873. One can recognise an EGF-like 31; calcium-binding domain in the interval 1892 to 1933 (DRNECLEIPNVCSHGLCVDLQGSYQCICHNGFKASQDQTMCM). The 39-residue stretch at 1934–1972 (DVDECERHPCGNGTCKNTVGSYNCLCYPGFELTHNNDCL) folds into the EGF-like 32; calcium-binding domain. Asparagine 1945 carries N-linked (GlcNAc...) asparagine glycosylation. Serine 1954 carries an O-linked (Glc) serine glycan. An EGF-like 33; calcium-binding domain is found at 1973-2015 (DIDECSSFFGQVCRNGRCFNEIGSFKCLCNEGYELTPDGKNCI). The O-linked (Glc) serine glycan is linked to serine 1996. The region spanning 2016–2055 (DTNECVALPGSCSPGTCQNLEGSFRCICPPGYEVKSENCI) is the EGF-like 34; calcium-binding domain. The EGF-like 35; calcium-binding domain maps to 2056–2097 (DINECDEDPNICLFGSCTNTPGGFQCLCPPGFVLSDNGRRCF). Residues 2102-2155 (SFCFTNFENGKCSVPKAFNTTKAKCCCSKMPGEGWGDPCELCPKDDEVAFQDLC) form the TB 8 domain. Asparagine 2120 carries an N-linked (GlcNAc...) asparagine glycan. Residues 2171–2212 (DVNECLESPGICSNGQCINTDGSFRCECPMGYNLDYTGVRCV) form the EGF-like 36; calcium-binding domain. 15 disulfides stabilise this stretch: cysteine 2175/cysteine 2187, cysteine 2182/cysteine 2196, cysteine 2198/cysteine 2211, cysteine 2217/cysteine 2228, cysteine 2223/cysteine 2237, cysteine 2239/cysteine 2251, cysteine 2257/cysteine 2268, cysteine 2264/cysteine 2277, cysteine 2279/cysteine 2292, cysteine 2298/cysteine 2312, cysteine 2305/cysteine 2321, cysteine 2323/cysteine 2336, cysteine 2342/cysteine 2354, cysteine 2349/cysteine 2363, and cysteine 2365/cysteine 2378. O-linked (Glc) serine glycosylation is present at serine 2193. One can recognise an EGF-like 37; calcium-binding domain in the interval 2213–2252 (DTDECSIGNPCGNGTCTNVIGSFECNCNEGFEPGPMMNCE). N-linked (GlcNAc...) asparagine glycosylation is present at asparagine 2225. Residues 2253 to 2293 (DINECAQNPLLCAFRCMNTFGSYECTCPIGYALREDQKMCK) enclose the EGF-like 38; calcium-binding domain. The O-linked (Glc) serine glycan is linked to serine 2274. Positions 2294 to 2337 (DLDECAEGLHDCESRGMMCKNLIGTFMCICPPGMARRPDGEGCV) constitute an EGF-like 39; calcium-binding domain. The 42-residue stretch at 2338 to 2379 (DENECRTKPGICENGRCVNIIGSYRCECNEGFQSSSSGTECL) folds into the EGF-like 40; calcium-binding domain. A glycan (O-linked (Glc) serine) is linked at serine 2360. In terms of domain architecture, TB 9 spans 2384-2437 (GLCFAEVLQTICQMASSSRNLVTKSECCCDGGRGWGHQCELCPLPGTAQYKKIC). The EGF-like 41; calcium-binding domain occupies 2449 to 2490 (DIDECKVMPNLCTNGQCINTMGSFRCFCKVGYTTDISGTSCI). 21 cysteine pairs are disulfide-bonded: cysteine 2453–cysteine 2465, cysteine 2460–cysteine 2474, cysteine 2476–cysteine 2489, cysteine 2495–cysteine 2506, cysteine 2502–cysteine 2515, cysteine 2517–cysteine 2530, cysteine 2536–cysteine 2547, cysteine 2543–cysteine 2556, cysteine 2558–cysteine 2569, cysteine 2575–cysteine 2588, cysteine 2582–cysteine 2597, cysteine 2599–cysteine 2612, cysteine 2618–cysteine 2628, cysteine 2624–cysteine 2637, cysteine 2639–cysteine 2652, cysteine 2658–cysteine 2669, cysteine 2664–cysteine 2678, cysteine 2680–cysteine 2693, cysteine 2699–cysteine 2710, cysteine 2706–cysteine 2719, and cysteine 2721–cysteine 2733. A glycan (O-linked (Glc) serine) is linked at serine 2471. An EGF-like 42; calcium-binding domain is found at 2491–2531 (DLDECSQSPKPCNYICKNTEGSYQCSCPRGYVLQEDGKTCK). A glycan (O-linked (Glc) serine) is linked at serine 2512. Positions 2532 to 2570 (DLDECQTKQHNCQFLCVNTLGGFTCKCPPGFTQHHTACI) constitute an EGF-like 43; calcium-binding domain. Residues 2571–2613 (DNNECGSQPSLCGAKGICQNTPGSFSCECQRGFSLDATGLNCE) enclose the EGF-like 44; calcium-binding domain. Serine 2594 is a glycosylation site (O-linked (Glc) serine). The region spanning 2614-2653 (DVDECDGNHRCQHGCQNILGGYRCGCPQGYIQHYQWNQCV) is the EGF-like 45; calcium-binding domain. Residues 2654–2694 (DENECSNPNACGSASCYNTLGSYKCACPSGFSFDQFSSACH) form the EGF-like 46; calcium-binding domain. O-linked (Glc) serine glycosylation is present at serine 2675. The EGF-like 47; calcium-binding domain maps to 2695–2734 (DVNECSSSKNPCNYGCSNTEGGYLCGCPPGYYRVGQGHCV). Asparagine 2808 carries N-linked (GlcNAc...) asparagine glycosylation.

It belongs to the fibrillin family. Interacts with BMP2, BMP4, BMP7, BMP10 and GDF5. Interacts with MFAP2 and MFAP5. Interacts with ADAMTSL5. Interacts with MFAP4. In terms of processing, N-glycosylated. Post-translationally, O-glycosylated on serine residues by POGLUT2 and POGLUT3. As to expression, almost exclusively expressed in placenta. Expressed at much lower level in other tissues. Expressed in fetal eye (18 weeks)in the retinal pigment epithelium (RPE), the choroid, Bruch's membrane and in the sclera. Not expressed in the neural retina. Present at high level in cytotrophoblasts as compared with syncytiotrophoblasts at 8-9 weeks of pregnancy (at protein level). Levels in the serum increase during pregnancy (at protein level).

Its subcellular location is the secreted. The protein resides in the extracellular space. It is found in the extracellular matrix. Functionally, fibrillins are structural components of 10-12 nm extracellular calcium-binding microfibrils, which occur either in association with elastin or in elastin-free bundles. Fibrillin-2-containing microfibrils regulate the early process of elastic fiber assembly. Regulates osteoblast maturation by controlling TGF-beta bioavailability and calibrating TGF-beta and BMP levels, respectively. In terms of biological role, hormone secreted by trophoblasts that promotes trophoblast invasiveness. Has glucogenic activity: is able to increase plasma glucose levels. The polypeptide is Fibrillin-2 (Homo sapiens (Human)).